The primary structure comprises 237 residues: Uridylate kinase (237 aa).

12–15 contacts ATP; that stretch reads KISG. Glycine 54 is a binding site for UMP. ATP is bound by residues glycine 55 and arginine 59. UMP contacts are provided by residues aspartate 72 and 133–140; that span reads TGNPFFST. 2 residues coordinate ATP: tyrosine 166 and aspartate 169.

This sequence belongs to the UMP kinase family. As to quaternary structure, homohexamer.

The protein localises to the cytoplasm. The catalysed reaction is UMP + ATP = UDP + ADP. The protein operates within pyrimidine metabolism; CTP biosynthesis via de novo pathway; UDP from UMP (UMPK route): step 1/1. With respect to regulation, inhibited by UTP. In terms of biological role, catalyzes the reversible phosphorylation of UMP to UDP. The polypeptide is Uridylate kinase (Caldanaerobacter subterraneus subsp. tengcongensis (strain DSM 15242 / JCM 11007 / NBRC 100824 / MB4) (Thermoanaerobacter tengcongensis)).